The primary structure comprises 463 residues: tRNA-2-methylthio-N(6)-dimethylallyladenosine synthase (463 aa).

One can recognise an MTTase N-terminal domain in the interval Gly19–Ser135. [4Fe-4S] cluster is bound by residues Cys28, Cys64, Cys98, Cys170, Cys174, and Cys177. The region spanning Arg156–Glu393 is the Radical SAM core domain. The TRAM domain occupies Gln396–Leu463.

It belongs to the methylthiotransferase family. MiaB subfamily. Monomer. It depends on [4Fe-4S] cluster as a cofactor.

The protein localises to the cytoplasm. The catalysed reaction is N(6)-dimethylallyladenosine(37) in tRNA + (sulfur carrier)-SH + AH2 + 2 S-adenosyl-L-methionine = 2-methylsulfanyl-N(6)-dimethylallyladenosine(37) in tRNA + (sulfur carrier)-H + 5'-deoxyadenosine + L-methionine + A + S-adenosyl-L-homocysteine + 2 H(+). In terms of biological role, catalyzes the methylthiolation of N6-(dimethylallyl)adenosine (i(6)A), leading to the formation of 2-methylthio-N6-(dimethylallyl)adenosine (ms(2)i(6)A) at position 37 in tRNAs that read codons beginning with uridine. The chain is tRNA-2-methylthio-N(6)-dimethylallyladenosine synthase from Prochlorococcus marinus (strain NATL2A).